The primary structure comprises 206 residues: dITP/XTP pyrophosphatase (206 aa).

7–12 (SNNAKK) provides a ligand contact to substrate. The active-site Proton acceptor is aspartate 72. Aspartate 72 lines the Mg(2+) pocket. Substrate contacts are provided by residues serine 73, 155–158 (FGYD), lysine 182, and 187–188 (HR).

It belongs to the HAM1 NTPase family. In terms of assembly, homodimer. It depends on Mg(2+) as a cofactor.

It carries out the reaction XTP + H2O = XMP + diphosphate + H(+). The catalysed reaction is dITP + H2O = dIMP + diphosphate + H(+). The enzyme catalyses ITP + H2O = IMP + diphosphate + H(+). Functionally, pyrophosphatase that catalyzes the hydrolysis of nucleoside triphosphates to their monophosphate derivatives, with a high preference for the non-canonical purine nucleotides XTP (xanthosine triphosphate), dITP (deoxyinosine triphosphate) and ITP. Seems to function as a house-cleaning enzyme that removes non-canonical purine nucleotides from the nucleotide pool, thus preventing their incorporation into DNA/RNA and avoiding chromosomal lesions. The chain is dITP/XTP pyrophosphatase from Corynebacterium glutamicum (strain R).